The following is a 649-amino-acid chain: DNA mismatch repair protein MutL (649 aa).

It belongs to the DNA mismatch repair MutL/HexB family.

This protein is involved in the repair of mismatches in DNA. It is required for dam-dependent methyl-directed DNA mismatch repair. May act as a 'molecular matchmaker', a protein that promotes the formation of a stable complex between two or more DNA-binding proteins in an ATP-dependent manner without itself being part of a final effector complex. The polypeptide is DNA mismatch repair protein MutL (Streptococcus pneumoniae (strain P1031)).